The primary structure comprises 125 residues: Cholecystokinin-8 (125 aa).

A signal peptide spans 1 to 20 (MYSGICSCLFLAVLSSSSLG). Positions 21–105 (QQISGSQHAN…FDPTHRIKDR (85 aa)) are excised as a propeptide. Sulfotyrosine is present on Y107. The residue at position 113 (F113) is a Phenylalanine amide. Residues 114–125 (GRRSAEEYEYSS) constitute a propeptide that is removed on maturation.

This sequence belongs to the gastrin/cholecystokinin family.

The protein localises to the secreted. Hypotensive neuropeptide that binds cholecystokinin receptors (CCKAR). In Python molurus (Indian python), this protein is Cholecystokinin-8 (CCK).